The sequence spans 158 residues: Protein-export protein SecB (158 aa).

It belongs to the SecB family. As to quaternary structure, homotetramer, a dimer of dimers. One homotetramer interacts with 1 SecA dimer.

It is found in the cytoplasm. One of the proteins required for the normal export of preproteins out of the cell cytoplasm. It is a molecular chaperone that binds to a subset of precursor proteins, maintaining them in a translocation-competent state. It also specifically binds to its receptor SecA. The protein is Protein-export protein SecB of Bartonella quintana (strain Toulouse) (Rochalimaea quintana).